A 417-amino-acid polypeptide reads, in one-letter code: D-galactonate dehydratase family member RspA (417 aa).

Positions 43 and 127 each coordinate substrate. The active-site Proton donor/acceptor is the Tyr158. Asp223 is a Mg(2+) binding site. His225 serves as the catalytic Proton donor/acceptor. Mg(2+) is bound by residues Glu249 and Glu275. Residues Glu275, Arg296, His325, Asp329, and Glu352 each contribute to the substrate site.

The protein belongs to the mandelate racemase/muconate lactonizing enzyme family. GalD subfamily. Mg(2+) serves as cofactor.

It catalyses the reaction D-gluconate = 2-dehydro-3-deoxy-D-gluconate + H2O. In terms of biological role, has low D-gluconate dehydratase activity (in vitro), suggesting that it has no significant role in D-gluconate degradation in vivo. Has no detectable activity with a panel of 70 other acid sugars (in vitro). In Pantoea ananatis (strain LMG 20103), this protein is D-galactonate dehydratase family member RspA (rspA).